Here is a 66-residue protein sequence, read N- to C-terminus: Small vasohibin-binding protein (66 aa).

Basic and acidic residues predominate over residues 1–23 (MDPPARKEKPKVKEPVSRIEKAK). Residues 1–32 (MDPPARKEKPKVKEPVSRIEKAKQKSAQQELK) are disordered. Residues 5–52 (ARKEKPKVKEPVSRIEKAKQKSAQQELKQRQRAEIYALNRVMTELEQQ) adopt a coiled-coil conformation.

This sequence belongs to the SVBP family. In terms of assembly, interacts with VASH1 and VASH2.

It localises to the cytoplasm. The protein localises to the secreted. The protein resides in the cytoskeleton. Its function is as follows. Enhances the tyrosine carboxypeptidase activity of VASH1 and VASH2, thereby promoting the removal of the C-terminal tyrosine residue of alpha-tubulin. Also required to enhance the solubility and secretion of VASH1 and VASH2. Plays a role in axon and excitatory synapse formation. The polypeptide is Small vasohibin-binding protein (Bos taurus (Bovine)).